A 158-amino-acid chain; its full sequence is Ribosome maturation factor RimP (158 aa).

The protein belongs to the RimP family.

It localises to the cytoplasm. Its function is as follows. Required for maturation of 30S ribosomal subunits. The sequence is that of Ribosome maturation factor RimP from Streptococcus uberis (strain ATCC BAA-854 / 0140J).